A 973-amino-acid chain; its full sequence is Putative helicase 022R (973 aa).

Positions 473–502 (AKARGGRDSGNEDDEEDSATDEDDSNPWDS) are disordered. A compositionally biased stretch (acidic residues) spans 483–498 (NEDDEEDSATDEDDSN). The 183-residue stretch at 658 to 840 (GPVTKLLAFF…FVTPGTTAPA (183 aa)) folds into the SF3 helicase domain. 702 to 709 (GTGNNGKT) provides a ligand contact to ATP.

The polypeptide is Putative helicase 022R (Frog virus 3 (isolate Goorha) (FV-3)).